Reading from the N-terminus, the 354-residue chain is Ribosomal RNA large subunit methyltransferase M (354 aa).

Residues S183, 216–219 (SPGG), D235, D255, and D271 each bind S-adenosyl-L-methionine. K300 serves as the catalytic Proton acceptor.

It belongs to the class I-like SAM-binding methyltransferase superfamily. RNA methyltransferase RlmE family. RlmM subfamily. In terms of assembly, monomer.

It is found in the cytoplasm. The enzyme catalyses cytidine(2498) in 23S rRNA + S-adenosyl-L-methionine = 2'-O-methylcytidine(2498) in 23S rRNA + S-adenosyl-L-homocysteine + H(+). Functionally, catalyzes the 2'-O-methylation at nucleotide C2498 in 23S rRNA. The protein is Ribosomal RNA large subunit methyltransferase M of Pseudomonas putida (strain ATCC 47054 / DSM 6125 / CFBP 8728 / NCIMB 11950 / KT2440).